We begin with the raw amino-acid sequence, 450 residues long: C4-dicarboxylate transport protein (450 aa).

Transmembrane regions (helical) follow at residues 10–30, 46–66, 78–98, 143–163, 190–210, 224–244, 291–311, 332–352, and 354–374; these read SLYF…HFYP, LIKM…IAGM, YALL…LIVV, IVGA…VIFG, IINM…AFTI, LMIC…GAIA, VVGL…SIYL, ITLL…TGSG, and IVLA…LALI. The disordered stretch occupies residues 428–450; that stretch reads PEDDLGVAEGPTPGAAVNTTKTV.

The protein belongs to the dicarboxylate/amino acid:cation symporter (DAACS) (TC 2.A.23) family.

It localises to the cell inner membrane. Functionally, responsible for the transport of dicarboxylates such as succinate, fumarate, and malate from the periplasm across the membrane. The sequence is that of C4-dicarboxylate transport protein from Pseudomonas syringae pv. syringae (strain B728a).